Consider the following 453-residue polypeptide: UDP-N-acetylmuramoylalanine--D-glutamate ligase (453 aa).

117–123 (GSNGKST) is an ATP binding site.

Belongs to the MurCDEF family.

The protein localises to the cytoplasm. The catalysed reaction is UDP-N-acetyl-alpha-D-muramoyl-L-alanine + D-glutamate + ATP = UDP-N-acetyl-alpha-D-muramoyl-L-alanyl-D-glutamate + ADP + phosphate + H(+). Its pathway is cell wall biogenesis; peptidoglycan biosynthesis. Cell wall formation. Catalyzes the addition of glutamate to the nucleotide precursor UDP-N-acetylmuramoyl-L-alanine (UMA). The protein is UDP-N-acetylmuramoylalanine--D-glutamate ligase of Chromobacterium violaceum (strain ATCC 12472 / DSM 30191 / JCM 1249 / CCUG 213 / NBRC 12614 / NCIMB 9131 / NCTC 9757 / MK).